The primary structure comprises 273 residues: 2,3,4,5-tetrahydropyridine-2,6-dicarboxylate N-succinyltransferase (273 aa).

The substrate site is built by Arg104 and Asp141.

Belongs to the transferase hexapeptide repeat family. Homotrimer.

It localises to the cytoplasm. It carries out the reaction (S)-2,3,4,5-tetrahydrodipicolinate + succinyl-CoA + H2O = (S)-2-succinylamino-6-oxoheptanedioate + CoA. It participates in amino-acid biosynthesis; L-lysine biosynthesis via DAP pathway; LL-2,6-diaminopimelate from (S)-tetrahydrodipicolinate (succinylase route): step 1/3. This chain is 2,3,4,5-tetrahydropyridine-2,6-dicarboxylate N-succinyltransferase, found in Neisseria meningitidis serogroup C (strain 053442).